We begin with the raw amino-acid sequence, 264 residues long: 4-oxalocrotonate decarboxylase (264 aa).

It belongs to the hydratase/decarboxylase family.

It catalyses the reaction (3E)-2-oxohex-3-enedioate + H(+) = 2-oxopent-4-enoate + CO2. Its pathway is xenobiotic degradation; toluene degradation. In Pseudomonas putida (Arthrobacter siderocapsulatus), this protein is 4-oxalocrotonate decarboxylase (xylI).